A 157-amino-acid chain; its full sequence is Transcription factor HES-2 (157 aa).

In terms of domain architecture, bHLH spans L13–Q70. The 34-residue stretch at Y86–L119 folds into the Orange domain. Positions V124 to W157 are disordered. Over residues S125–P139 the composition is skewed to low complexity. Residues A140–S149 are compositionally biased toward pro residues. The WRPW motif signature appears at W154–W157.

In terms of assembly, transcription repression requires formation of a complex with a corepressor protein of the Groucho/TLE family.

The protein resides in the nucleus. Its function is as follows. Transcriptional repressor of genes that require a bHLH protein for their transcription. The protein is Transcription factor HES-2 (Hes2) of Rattus norvegicus (Rat).